A 127-amino-acid polypeptide reads, in one-letter code: Large ribosomal subunit protein eL8 (127 aa).

It belongs to the eukaryotic ribosomal protein eL8 family. Part of the 50S ribosomal subunit. Probably part of the RNase P complex.

It localises to the cytoplasm. Multifunctional RNA-binding protein that recognizes the K-turn motif in ribosomal RNA, the RNA component of RNase P, box H/ACA, box C/D and box C'/D' sRNAs. This chain is Large ribosomal subunit protein eL8, found in Desulfurococcus amylolyticus (strain DSM 18924 / JCM 16383 / VKM B-2413 / 1221n) (Desulfurococcus kamchatkensis).